The primary structure comprises 422 residues: MDVFSFGQGNNTTASQEPFGTGGNVTSISDVTFSYQVITSLLLGTLIFCAVLGNACVVAAIALERSLQNVANYLIGSLAVTDLMVSVLVLPMAALYQVLNKWTLGQVTCDLFIALDVLCCTSSILHLCAIALDRYWAITDPIDYVNKRTPRRAAALISLTWLIGFLISIPPMLGWRTPEDRSDPDACTISKDHGYTIYSTFGAFYIPLLLMLVLYGRIFRAARFRIRKTVRKVEKKGAGTSLGTSSAPPPKKSLNGQPGSGDWRRCAENRAVGTPCTNGAVRQGDDEATLEVIEVHRVGNSKEHLPLPSESGSNSYAPACLERKNERNAEAKRKMALARERKTVKTLGIIMGTFILCWLPFFIVALVLPFCESSCHMPALLGAIINWLGYSNSLLNPVIYAYFNKDFQNAFKKIIKCKFCRR.

Topologically, residues 1-38 are extracellular; sequence MDVFSFGQGNNTTASQEPFGTGGNVTSISDVTFSYQVI. Asparagine 10, asparagine 11, and asparagine 24 each carry an N-linked (GlcNAc...) asparagine glycan. Residues 39-59 traverse the membrane as a helical segment; it reads TSLLLGTLIFCAVLGNACVVA. Topologically, residues 60-73 are cytoplasmic; it reads AIALERSLQNVANY. A helical transmembrane segment spans residues 74–98; sequence LIGSLAVTDLMVSVLVLPMAALYQV. Topologically, residues 99–107 are extracellular; sequence LNKWTLGQV. Residues 108-132 traverse the membrane as a helical segment; the sequence is TCDLFIALDVLCCTSSILHLCAIAL. An intrachain disulfide couples cysteine 109 to cysteine 187. Aspartate 116 and cysteine 120 together coordinate serotonin. The short motif at 133–135 is the DRY motif; important for ligand-induced conformation changes element; sequence DRY. Residues 133–152 are Cytoplasmic-facing; sequence DRYWAITDPIDYVNKRTPRR. A helical membrane pass occupies residues 153–174; that stretch reads AAALISLTWLIGFLISIPPMLG. Residues 175–193 are Extracellular-facing; the sequence is WRTPEDRSDPDACTISKDH. A helical membrane pass occupies residues 194–216; sequence GYTIYSTFGAFYIPLLLMLVLYG. The Cytoplasmic segment spans residues 217–346; that stretch reads RIFRAARFRI…LARERKTVKT (130 aa). Residues 235 to 261 form a disordered region; sequence KKGAGTSLGTSSAPPPKKSLNGQPGSG. 1D-myo-inositol 4-phosphate-binding residues include lysine 345, threonine 346, and glycine 352. Residues 347 to 370 traverse the membrane as a helical segment; that stretch reads LGIIMGTFILCWLPFFIVALVLPF. The Extracellular portion of the chain corresponds to 371–378; it reads CESSCHMP. The helical transmembrane segment at 379–403 threads the bilayer; sequence ALLGAIINWLGYSNSLLNPVIYAYF. The NPxxY motif; important for ligand-induced conformation changes and signaling signature appears at 396–400; the sequence is NPVIY. The 1D-myo-inositol 4-phosphate site is built by phenylalanine 403, asparagine 404, and lysine 405. Residues 404 to 422 lie on the Cytoplasmic side of the membrane; the sequence is NKDFQNAFKKIIKCKFCRR.

This sequence belongs to the G-protein coupled receptor 1 family. 5-hydroxytryptamine receptor subfamily. HTR1A sub-subfamily. In terms of assembly, heterodimer; heterodimerizes with GPER1. Interacts with YIF1B. Interacts with GPR39 and GALR1. As to expression, detected in hypothalamus, mesencephalon, amygdala, medulla, thalamus, septum and hippocampus.

Its subcellular location is the cell membrane. It is found in the cell projection. It localises to the dendrite. Its activity is regulated as follows. G-protein coupled receptor activity is regulated by lipids: phosphatidylinositol 4-phosphate increases HTR1A-mediated activity. Functionally, G-protein coupled receptor for 5-hydroxytryptamine (serotonin). Also functions as a receptor for various drugs and psychoactive substances. Ligand binding causes a conformation change that triggers signaling via guanine nucleotide-binding proteins (G proteins) and modulates the activity of downstream effectors, such as adenylate cyclase. HTR1A is coupled to G(i)/G(o) G alpha proteins and mediates inhibitory neurotransmission: signaling inhibits adenylate cyclase activity and activates a phosphatidylinositol-calcium second messenger system that regulates the release of Ca(2+) ions from intracellular stores. Beta-arrestin family members regulate signaling by mediating both receptor desensitization and resensitization processes. In Rattus norvegicus (Rat), this protein is 5-hydroxytryptamine receptor 1A.